We begin with the raw amino-acid sequence, 420 residues long: Gamma-glutamyl phosphate reductase (420 aa).

It belongs to the gamma-glutamyl phosphate reductase family.

Its subcellular location is the cytoplasm. The catalysed reaction is L-glutamate 5-semialdehyde + phosphate + NADP(+) = L-glutamyl 5-phosphate + NADPH + H(+). It functions in the pathway amino-acid biosynthesis; L-proline biosynthesis; L-glutamate 5-semialdehyde from L-glutamate: step 2/2. Functionally, catalyzes the NADPH-dependent reduction of L-glutamate 5-phosphate into L-glutamate 5-semialdehyde and phosphate. The product spontaneously undergoes cyclization to form 1-pyrroline-5-carboxylate. The chain is Gamma-glutamyl phosphate reductase from Cereibacter sphaeroides (strain KD131 / KCTC 12085) (Rhodobacter sphaeroides).